The primary structure comprises 635 residues: MERWSINESAKIYNLPNWGADLFSINKKGNVCVHPSPTSKHSIDLRALVDDLIKRKIKPPILLRFMDVLQGRIASINRVFKNAIDENDYPATYQTFYPIKVNQQRQVVEAIAKFGKRYNIGLEVGSKPELVIGISFATGNGIPIICNGYKDTEYIETVLYATKIGYDITIVVEKMFELEKIIALSKKTGIKPKLGIRVKLSSKGTGKWATSGGEDAKFGLRMSEIIAAIGLLEQNDLLDRVKLLHFHIGSQITKIDKIKSALIEGTRIYAEMRKLGVGIRYVDIGGGLGVDYDGSKSSYFSSVNYSIEEYANDVIYQIKNICEDAGVECPNIISESGRATAAHYSVLVTNLLNTNTSNAMPDFEETLNGTEKLAPTVKKLVDIYKSIDRYSLREDYHDTVQLIQEAVSLFNLGYLTLNERAMAEWLHGKILRKINGIVEKIKPIPEELQNFQLSLRQTYFANFSLFQSIPDSWAIDQLFPIVPIQRLNQKPDVMASIADITCDSDGEITSFVGENGRTKYLPLHKMRKDEDYFVGFFLIGAYQEILGDMHNLFGDTNAVHVTFNKKTGYKIDTVIHGDATWESLKYVQYKGPEILKHVRDTLEKDVALRKVTIEESSHFLELLDRTLLGYTYLGE.

Lysine 100 bears the N6-(pyridoxal phosphate)lysine mark. Residue 282–292 (VDIGGGLGVDY) participates in substrate binding.

This sequence belongs to the Orn/Lys/Arg decarboxylase class-II family. SpeA subfamily. The cofactor is Mg(2+). Requires pyridoxal 5'-phosphate as cofactor.

The catalysed reaction is L-arginine + H(+) = agmatine + CO2. It functions in the pathway amine and polyamine biosynthesis; agmatine biosynthesis; agmatine from L-arginine: step 1/1. Its function is as follows. Catalyzes the biosynthesis of agmatine from arginine. The protein is Biosynthetic arginine decarboxylase of Geobacter sulfurreducens (strain ATCC 51573 / DSM 12127 / PCA).